The sequence spans 239 residues: Putative CRISPR-associated endoribonuclease-like protein Cas6nc (239 aa).

This sequence belongs to the CRISPR-associated protein Cas6/Cse3/CasE family. As to quaternary structure, monomer; homodimer when crystallized in the presence of crRNA. Varying the crRNA sequence varies degree of oligomerization and structure.

In terms of biological role, CRISPR (clustered regularly interspaced short palindromic repeat), is an adaptive immune system that provides protection against mobile genetic elements (viruses, transposable elements and conjugative plasmids). CRISPR clusters contain sequences complementary to antecedent mobile elements and target invading nucleic acids. CRISPR clusters are transcribed and processed into CRISPR RNA (crRNA), also called psiRNA (prokaryotic silencing) in this organism (Potential). This chain is Putative CRISPR-associated endoribonuclease-like protein Cas6nc (cas6nc), found in Pyrococcus horikoshii (strain ATCC 700860 / DSM 12428 / JCM 9974 / NBRC 100139 / OT-3).